The sequence spans 342 residues: Methionyl-tRNA formyltransferase (342 aa).

Position 108–111 (108–111) interacts with (6S)-5,6,7,8-tetrahydrofolate; that stretch reads SLLP.

It belongs to the Fmt family.

The enzyme catalyses L-methionyl-tRNA(fMet) + (6R)-10-formyltetrahydrofolate = N-formyl-L-methionyl-tRNA(fMet) + (6S)-5,6,7,8-tetrahydrofolate + H(+). In terms of biological role, attaches a formyl group to the free amino group of methionyl-tRNA(fMet). The formyl group appears to play a dual role in the initiator identity of N-formylmethionyl-tRNA by promoting its recognition by IF2 and preventing the misappropriation of this tRNA by the elongation apparatus. This Prochlorococcus marinus (strain MIT 9313) protein is Methionyl-tRNA formyltransferase.